Here is a 717-residue protein sequence, read N- to C-terminus: Fatty acid oxidation complex subunit alpha (717 aa).

The segment at 1-189 is enoyl-CoA hydratase/isomerase; the sequence is MIYQSPTIEV…NVGAIDALVA (189 aa). Asp-296 provides a ligand contact to substrate. A 3-hydroxyacyl-CoA dehydrogenase region spans residues 311–717; that stretch reads KKVNSAAVLG…ANNGSYYQQA (407 aa). Residues Met-324, Asp-343, 400–402, Lys-407, and Ser-429 each bind NAD(+); that span reads VVE. Residue His-450 is the For 3-hydroxyacyl-CoA dehydrogenase activity of the active site. Asn-453 contributes to the NAD(+) binding site. Substrate contacts are provided by Asn-500 and Tyr-660.

In the N-terminal section; belongs to the enoyl-CoA hydratase/isomerase family. It in the C-terminal section; belongs to the 3-hydroxyacyl-CoA dehydrogenase family. As to quaternary structure, heterotetramer of two alpha chains (FadB) and two beta chains (FadA).

The enzyme catalyses a (3S)-3-hydroxyacyl-CoA + NAD(+) = a 3-oxoacyl-CoA + NADH + H(+). It catalyses the reaction a (3S)-3-hydroxyacyl-CoA = a (2E)-enoyl-CoA + H2O. It carries out the reaction a 4-saturated-(3S)-3-hydroxyacyl-CoA = a (3E)-enoyl-CoA + H2O. The catalysed reaction is (3S)-3-hydroxybutanoyl-CoA = (3R)-3-hydroxybutanoyl-CoA. The enzyme catalyses a (3Z)-enoyl-CoA = a 4-saturated (2E)-enoyl-CoA. It catalyses the reaction a (3E)-enoyl-CoA = a 4-saturated (2E)-enoyl-CoA. It functions in the pathway lipid metabolism; fatty acid beta-oxidation. Its function is as follows. Involved in the aerobic and anaerobic degradation of long-chain fatty acids via beta-oxidation cycle. Catalyzes the formation of 3-oxoacyl-CoA from enoyl-CoA via L-3-hydroxyacyl-CoA. It can also use D-3-hydroxyacyl-CoA and cis-3-enoyl-CoA as substrate. The chain is Fatty acid oxidation complex subunit alpha from Shewanella piezotolerans (strain WP3 / JCM 13877).